The primary structure comprises 236 residues: Phosphatidylserine decarboxylase proenzyme (236 aa).

Serine 194 functions as the Schiff-base intermediate with substrate; via pyruvic acid in the catalytic mechanism. Pyruvic acid (Ser); by autocatalysis is present on serine 194.

The protein belongs to the phosphatidylserine decarboxylase family. PSD-A subfamily. As to quaternary structure, heterodimer of a large membrane-associated beta subunit and a small pyruvoyl-containing alpha subunit. The cofactor is pyruvate. In terms of processing, is synthesized initially as an inactive proenzyme. Formation of the active enzyme involves a self-maturation process in which the active site pyruvoyl group is generated from an internal serine residue via an autocatalytic post-translational modification. Two non-identical subunits are generated from the proenzyme in this reaction, and the pyruvate is formed at the N-terminus of the alpha chain, which is derived from the carboxyl end of the proenzyme. The post-translation cleavage follows an unusual pathway, termed non-hydrolytic serinolysis, in which the side chain hydroxyl group of the serine supplies its oxygen atom to form the C-terminus of the beta chain, while the remainder of the serine residue undergoes an oxidative deamination to produce ammonia and the pyruvoyl prosthetic group on the alpha chain.

It is found in the cell membrane. It carries out the reaction a 1,2-diacyl-sn-glycero-3-phospho-L-serine + H(+) = a 1,2-diacyl-sn-glycero-3-phosphoethanolamine + CO2. It participates in phospholipid metabolism; phosphatidylethanolamine biosynthesis; phosphatidylethanolamine from CDP-diacylglycerol: step 2/2. Its function is as follows. Catalyzes the formation of phosphatidylethanolamine (PtdEtn) from phosphatidylserine (PtdSer). In Rhodospirillum rubrum (strain ATCC 11170 / ATH 1.1.1 / DSM 467 / LMG 4362 / NCIMB 8255 / S1), this protein is Phosphatidylserine decarboxylase proenzyme.